A 280-amino-acid polypeptide reads, in one-letter code: Large ribosomal subunit protein uL2 (280 aa).

Residues 213–280 (RWKGKRPSVR…RRRTGKKHAR (68 aa)) are disordered. Residues 268 to 280 (IVRRRRTGKKHAR) show a composition bias toward basic residues.

This sequence belongs to the universal ribosomal protein uL2 family. As to quaternary structure, part of the 50S ribosomal subunit. Forms a bridge to the 30S subunit in the 70S ribosome.

Functionally, one of the primary rRNA binding proteins. Required for association of the 30S and 50S subunits to form the 70S ribosome, for tRNA binding and peptide bond formation. It has been suggested to have peptidyltransferase activity; this is somewhat controversial. Makes several contacts with the 16S rRNA in the 70S ribosome. The sequence is that of Large ribosomal subunit protein uL2 from Mycobacterium leprae (strain Br4923).